Consider the following 520-residue polypeptide: tRNA (guanine-N(7)-)-methyltransferase non-catalytic subunit TRM82 (520 aa).

Positions 51-102 (PLDSEISPDRASSAGTCAEPPEKRRKLTPPVDESGEAQTEQSAKAKARKSQT) are disordered. WD repeat units lie at residues 105–145 (QAWS…KLTQ), 244–291 (GHVS…HIIH), and 296–338 (GHTS…QTIP).

This sequence belongs to the WD repeat TRM82 family. In terms of assembly, forms a heterodimer with the catalytic subunit TRM8.

It is found in the nucleus. It participates in tRNA modification; N(7)-methylguanine-tRNA biosynthesis. Functionally, required for the formation of N(7)-methylguanine at position 46 (m7G46) in tRNA. In the complex, it is required to stabilize and induce conformational changes of the catalytic subunit. The polypeptide is tRNA (guanine-N(7)-)-methyltransferase non-catalytic subunit TRM82 (Coccidioides immitis (strain RS) (Valley fever fungus)).